The chain runs to 128 residues: Probable 4-amino-4-deoxy-L-arabinose-phosphoundecaprenol flippase subunit ArnF (128 aa).

Over 1–2 (MG) the chain is Cytoplasmic. A helical transmembrane segment spans residues 3-23 (LMWGLFSVIIASAAQLSLGFA). At 24–32 (ASHLPPMTH) the chain is on the periplasmic side. Residues 33 to 53 (LWDFIAALLAFGLDARILLLG) traverse the membrane as a helical segment. The Cytoplasmic segment spans residues 54-76 (LQGYLLSVFCWYKTLHKLALSKA). The helical transmembrane segment at 77–97 (YALLSMSYVLVWIASMVLPGW) threads the bilayer. The Periplasmic portion of the chain corresponds to 98-100 (EGT). The chain crosses the membrane as a helical span at residues 101-121 (FSLKALLGVACIMSGLMLIFL). Residues 122–128 (PTTKQRY) are Cytoplasmic-facing.

Belongs to the ArnF family. As to quaternary structure, heterodimer of ArnE and ArnF.

Its subcellular location is the cell inner membrane. It functions in the pathway bacterial outer membrane biogenesis; lipopolysaccharide biosynthesis. Its function is as follows. Translocates 4-amino-4-deoxy-L-arabinose-phosphoundecaprenol (alpha-L-Ara4N-phosphoundecaprenol) from the cytoplasmic to the periplasmic side of the inner membrane. This chain is Probable 4-amino-4-deoxy-L-arabinose-phosphoundecaprenol flippase subunit ArnF, found in Escherichia coli O7:K1 (strain IAI39 / ExPEC).